A 395-amino-acid chain; its full sequence is S-adenosylmethionine synthase 3 (395 aa).

Glu-10 contributes to the Mg(2+) binding site. His-16 is a binding site for ATP. Glu-44 contacts K(+). Residues Glu-57 and Gln-100 each coordinate L-methionine. Residues 168–170 (DGK), 236–239 (SGRF), Asp-247, 253–254 (RK), Ala-270, Lys-274, and Lys-278 contribute to the ATP site. Position 247 (Asp-247) interacts with L-methionine. Lys-278 contributes to the L-methionine binding site.

Belongs to the AdoMet synthase family. As to quaternary structure, homotetramer. Mn(2+) serves as cofactor. The cofactor is Mg(2+). Requires Co(2+) as cofactor. K(+) is required as a cofactor.

The protein localises to the cytoplasm. It carries out the reaction L-methionine + ATP + H2O = S-adenosyl-L-methionine + phosphate + diphosphate. It participates in amino-acid biosynthesis; S-adenosyl-L-methionine biosynthesis; S-adenosyl-L-methionine from L-methionine: step 1/1. Catalyzes the formation of S-adenosylmethionine from methionine and ATP. The reaction comprises two steps that are both catalyzed by the same enzyme: formation of S-adenosylmethionine (AdoMet) and triphosphate, and subsequent hydrolysis of the triphosphate. The chain is S-adenosylmethionine synthase 3 (METK3) from Populus trichocarpa (Western balsam poplar).